Reading from the N-terminus, the 966-residue chain is Calsyntenin-2 (966 aa).

An N-terminal signal peptide occupies residues 1 to 20 (MLPGRLCLVPLLLALGVGSG). Residues 21 to 835 (GGSGDGGDSR…SIQRSSVVPS (815 aa)) are Extracellular-facing. Cadherin domains follow at residues 46 to 162 (IETS…APTF) and 163 to 282 (KEPA…MPLF). Asn-58 and Asn-100 each carry an N-linked (GlcNAc...) asparagine glycan. Asn-344, Asn-376, Asn-720, and Asn-733 each carry an N-linked (GlcNAc...) asparagine glycan. The helical transmembrane segment at 836–856 (IATVVIIISVCMLVFVVAMGV) threads the bilayer. Topologically, residues 857 to 966 (YRVRIAHQHF…NTAGVINIWK (110 aa)) are cytoplasmic. A disordered region spans residues 890 to 966 (NPMEKHEGPG…NTAGVINIWK (77 aa)). Over residues 901–916 (GEDETTEVEEEEEAEE) the composition is skewed to acidic residues. Polar residues predominate over residues 943-960 (QSGTSSQSPERSTWNTAG).

The protein belongs to the calsyntenin family. Post-translationally, proteolytically processed under normal cellular conditions. A primary zeta-cleavage generates a large extracellular (soluble) N-terminal domain (sAlc) and a short C-terminal transmembrane fragment (CTF1). A secondary cleavage catalyzed by gamma-secretase within the transmembrane domain releases the beta-Alc-gamma chain in the extracellular milieu and produces an intracellular fragment (AlcICD). This processing is strongly suppressed in the tripartite complex formed with APBA2 and APP, which seems to prevent the association with PSEN1. In terms of tissue distribution, restricted to the brain. In the cerebral cortex, found in the somas and neuropil of all layers. Expressed at highest levels in neurons of cortical layers 5 and 6 and, at lower levels, in neurons of the upper layers. Highly expressed in Purkinje cells. Also found in a few scattered interneurons throughout the granule cell layer and occasionally in neurons in the molecular layer (at protein level). Present throughout all cortical layers, highest levels in GABAergic neurons (based on morphology and distribution pattern).

The protein resides in the postsynaptic cell membrane. It localises to the endoplasmic reticulum membrane. The protein localises to the golgi apparatus membrane. Its subcellular location is the cell projection. It is found in the dendrite. Its function is as follows. Postsynaptic adhesion molecule that binds to presynaptic neurexins to mediate synapse formation, and which is involved in learning and memory. Promotes synapse development by acting as a cell adhesion molecule at the postsynaptic membrane, which associates with neurexin-alpha at the presynaptic membrane. This Mus musculus (Mouse) protein is Calsyntenin-2.